The primary structure comprises 327 residues: MDVLNKSIQTALEALPKTSSSSSDGVSLVSLKCQLLLSYVQKLAFLMLVKLDDESFLQHQDVVEKLVQLRIEIEKIRPLENRIQYSVDKLLRAAGRKEEIGSIKEPENNGNDKDSQDSLKLHYKPNLSEFADDSDGPASENNVVKEDDKSSISSEDEEEELRSAKDGIYRPPRIRAVTMDSEKRTRHRPNHLVDEFVSSDMSSVPQSMPSVGSNLEKRGRVIHADERELQKMRERIEYEESNYTRLPKLSKKDLKKSKRVKKHDYGGEDWSLLDRKFHDDDFSNRKLDLTSRAKRRANFEDVNDGSLASPVQIGQSYRKRKKNLKRR.

Disordered stretches follow at residues 127-170 (LSEF…GIYR) and 298-327 (NFEDVNDGSLASPVQIGQSYRKRKKNLKRR). S153, S154, and S309 each carry phosphoserine. Residues 317-327 (YRKRKKNLKRR) are compositionally biased toward basic residues.

This is an uncharacterized protein from Schizosaccharomyces pombe (strain 972 / ATCC 24843) (Fission yeast).